We begin with the raw amino-acid sequence, 108 residues long: Nucleoid-associated protein HCH_02614 (108 aa).

Belongs to the YbaB/EbfC family. In terms of assembly, homodimer.

It localises to the cytoplasm. Its subcellular location is the nucleoid. Binds to DNA and alters its conformation. May be involved in regulation of gene expression, nucleoid organization and DNA protection. The sequence is that of Nucleoid-associated protein HCH_02614 from Hahella chejuensis (strain KCTC 2396).